The following is a 135-amino-acid chain: Retinol-binding protein 1 (135 aa).

The important for interaction with STRA6 stretch occupies residues 22–32; sequence RALDVNVALRK. All-trans-retinol contacts are provided by lysine 41, methionine 63, and glutamine 109.

It belongs to the calycin superfamily. Fatty-acid binding protein (FABP) family. As to quaternary structure, interacts (only as retinol-free apoprotein) with STRA6.

The protein resides in the cytoplasm. The protein localises to the lipid droplet. Cytoplasmic retinol-binding protein. Accepts retinol from the transport protein STRA6, and thereby contributes to retinol uptake, storage and retinoid homeostasis. This chain is Retinol-binding protein 1 (Rbp1), found in Rattus norvegicus (Rat).